A 1175-amino-acid polypeptide reads, in one-letter code: Phospholipid-transporting ATPase IF (1175 aa).

The next 4 helical transmembrane spans lie at 69–89 (FYFL…SPIT), 91–111 (GLPL…EDWL), 287–307 (NTFL…STIL), and 338–358 (FISD…ISLY). Catalysis depends on Asp-407, which acts as the 4-aspartylphosphate intermediate. Residues Asp-407, Lys-408, Thr-409, Glu-530, Phe-571, Lys-594, Arg-625, Thr-705, Gly-706, Asp-707, Arg-793, and Lys-799 each coordinate ATP. Asp-407 is a Mg(2+) binding site. Thr-409 is a binding site for Mg(2+). Position 820 (Asp-820) interacts with Mg(2+). ATP is bound by residues Asn-823 and Asp-824. Asp-824 is a binding site for Mg(2+). 6 consecutive transmembrane segments (helical) span residues 862-882 (LLFV…QYFF), 910-930 (VYLT…YSLV), 963-983 (WTVL…FLVG), 994-1014 (MFGN…TVTV), 1033-1053 (GSII…WPFL), and 1060-1080 (FVFI…LMVV).

The protein belongs to the cation transport ATPase (P-type) (TC 3.A.3) family. Type IV subfamily. In terms of assembly, component of a P4-ATPase flippase complex which consists of a catalytic alpha subunit ATP11B and an accessory beta subunit TMEM30A. Mg(2+) is required as a cofactor. Expressed in retina, brain, liver, testes and kidney (at protein level).

Its subcellular location is the recycling endosome membrane. It is found in the early endosome. The protein resides in the endoplasmic reticulum. The protein localises to the golgi apparatus. It localises to the trans-Golgi network. The catalysed reaction is ATP + H2O + phospholipidSide 1 = ADP + phosphate + phospholipidSide 2.. The enzyme catalyses a 1,2-diacyl-sn-glycero-3-phospho-L-serine(out) + ATP + H2O = a 1,2-diacyl-sn-glycero-3-phospho-L-serine(in) + ADP + phosphate + H(+). It carries out the reaction a 1,2-diacyl-sn-glycero-3-phosphoethanolamine(out) + ATP + H2O = a 1,2-diacyl-sn-glycero-3-phosphoethanolamine(in) + ADP + phosphate + H(+). Functionally, catalytic component of a P4-ATPase flippase complex which catalyzes the hydrolysis of ATP coupled to the transport of aminophospholipids, phosphatidylserines (PS) and phosphatidylethanolamines (PE), from the outer to the inner leaflet of intracellular membranes. May contribute to the maintenance of membrane lipid asymmetry in endosome compartment. This is Phospholipid-transporting ATPase IF from Mus musculus (Mouse).